A 258-amino-acid polypeptide reads, in one-letter code: Imidazole glycerol phosphate synthase subunit HisF (258 aa).

Catalysis depends on residues Asp11 and Asp130.

Belongs to the HisA/HisF family. As to quaternary structure, heterodimer of HisH and HisF.

Its subcellular location is the cytoplasm. It catalyses the reaction 5-[(5-phospho-1-deoxy-D-ribulos-1-ylimino)methylamino]-1-(5-phospho-beta-D-ribosyl)imidazole-4-carboxamide + L-glutamine = D-erythro-1-(imidazol-4-yl)glycerol 3-phosphate + 5-amino-1-(5-phospho-beta-D-ribosyl)imidazole-4-carboxamide + L-glutamate + H(+). The protein operates within amino-acid biosynthesis; L-histidine biosynthesis; L-histidine from 5-phospho-alpha-D-ribose 1-diphosphate: step 5/9. In terms of biological role, IGPS catalyzes the conversion of PRFAR and glutamine to IGP, AICAR and glutamate. The HisF subunit catalyzes the cyclization activity that produces IGP and AICAR from PRFAR using the ammonia provided by the HisH subunit. The sequence is that of Imidazole glycerol phosphate synthase subunit HisF from Xanthomonas campestris pv. campestris (strain B100).